Consider the following 493-residue polypeptide: Cobyric acid synthase (493 aa).

The GATase cobBQ-type domain maps to 252-440; the sequence is PVKIVVLRLR…IHGIFESDSL (189 aa). The active-site Nucleophile is the Cys-333. The active site involves His-432.

It belongs to the CobB/CobQ family. CobQ subfamily.

The protein operates within cofactor biosynthesis; adenosylcobalamin biosynthesis. Functionally, catalyzes amidations at positions B, D, E, and G on adenosylcobyrinic A,C-diamide. NH(2) groups are provided by glutamine, and one molecule of ATP is hydrogenolyzed for each amidation. This Thermodesulfovibrio yellowstonii (strain ATCC 51303 / DSM 11347 / YP87) protein is Cobyric acid synthase.